The chain runs to 822 residues: DNA-directed RNA polymerase subunit beta N-terminal section (822 aa).

The segment at 376-408 (ELTEGNPSSKSQTKNKTSASKKSKTLNVANTKG) is disordered. The span at 383–393 (SSKSQTKNKTS) shows a compositional bias: low complexity.

This sequence belongs to the RNA polymerase beta chain family. In terms of assembly, in plastids the minimal PEP RNA polymerase catalytic core is composed of four subunits: alpha, beta, beta', and beta''. When a (nuclear-encoded) sigma factor is associated with the core the holoenzyme is formed, which can initiate transcription.

The protein localises to the plastid. It localises to the chloroplast. It catalyses the reaction RNA(n) + a ribonucleoside 5'-triphosphate = RNA(n+1) + diphosphate. DNA-dependent RNA polymerase catalyzes the transcription of DNA into RNA using the four ribonucleoside triphosphates as substrates. This chain is DNA-directed RNA polymerase subunit beta N-terminal section (rpoB1), found in Chlamydomonas reinhardtii (Chlamydomonas smithii).